Reading from the N-terminus, the 338-residue chain is Acetoin:2,6-dichlorophenolindophenol oxidoreductase subunit beta (338 aa).

In terms of assembly, tetramer of 2 alpha and 2 beta subunits.

It participates in ketone degradation; acetoin degradation. Its function is as follows. Catalyzes the 2,6-dichlorophenolindophenol-dependent cleavage of acetoin into acetate and acetaldehyde, in vitro. The beta subunit is probably not the catalytic subunit of the enzyme. This chain is Acetoin:2,6-dichlorophenolindophenol oxidoreductase subunit beta (acoB), found in Cupriavidus necator (strain ATCC 17699 / DSM 428 / KCTC 22496 / NCIMB 10442 / H16 / Stanier 337) (Ralstonia eutropha).